A 426-amino-acid polypeptide reads, in one-letter code: 4-hydroxy-3-methylbut-2-en-1-yl diphosphate synthase (flavodoxin) (426 aa).

The interval M1–R20 is disordered. C320, C323, C366, and E373 together coordinate [4Fe-4S] cluster.

It belongs to the IspG family. [4Fe-4S] cluster is required as a cofactor.

The catalysed reaction is (2E)-4-hydroxy-3-methylbut-2-enyl diphosphate + oxidized [flavodoxin] + H2O + 2 H(+) = 2-C-methyl-D-erythritol 2,4-cyclic diphosphate + reduced [flavodoxin]. Its pathway is isoprenoid biosynthesis; isopentenyl diphosphate biosynthesis via DXP pathway; isopentenyl diphosphate from 1-deoxy-D-xylulose 5-phosphate: step 5/6. Converts 2C-methyl-D-erythritol 2,4-cyclodiphosphate (ME-2,4cPP) into 1-hydroxy-2-methyl-2-(E)-butenyl 4-diphosphate. This Wolbachia pipientis subsp. Culex pipiens (strain wPip) protein is 4-hydroxy-3-methylbut-2-en-1-yl diphosphate synthase (flavodoxin).